The chain runs to 518 residues: Arginyl-tRNA--protein transferase 1 (518 aa).

Positions 149-165 are enriched in basic and acidic residues; sequence ESLQSEGKNSKKEEPHE. The interval 149-207 is disordered; that stretch reads ESLQSEGKNSKKEEPHELLQSQDSVGEKLGSGEPSHSVKVHTVPKPGKGADLSKPPCRK. At serine 169 the chain carries Phosphoserine.

Belongs to the R-transferase family. In terms of assembly, monomer. Interacts with LIAT1; LIAT1 is not a substrate of ATE1, the interaction takes place in the cytoplasm and seems to increase ATE1 arginyltransferase activity.

It is found in the nucleus. The protein resides in the cytoplasm. The enzyme catalyses an N-terminal L-alpha-aminoacyl-[protein] + L-arginyl-tRNA(Arg) = an N-terminal L-arginyl-L-aminoacyl-[protein] + tRNA(Arg) + H(+). Its function is as follows. Involved in the post-translational conjugation of arginine to the N-terminal aspartate or glutamate of a protein. This arginylation is required for degradation of the protein via the ubiquitin pathway. Does not arginylate cysteine residues. This Macaca fascicularis (Crab-eating macaque) protein is Arginyl-tRNA--protein transferase 1 (ATE1).